Consider the following 233-residue polypeptide: tRNA (guanine-N(1)-)-methyltransferase (233 aa).

Residues G113 and 133-138 (VGDYVL) each bind S-adenosyl-L-methionine.

This sequence belongs to the RNA methyltransferase TrmD family. Homodimer.

The protein resides in the cytoplasm. The enzyme catalyses guanosine(37) in tRNA + S-adenosyl-L-methionine = N(1)-methylguanosine(37) in tRNA + S-adenosyl-L-homocysteine + H(+). Functionally, specifically methylates guanosine-37 in various tRNAs. The chain is tRNA (guanine-N(1)-)-methyltransferase from Rhizobium etli (strain ATCC 51251 / DSM 11541 / JCM 21823 / NBRC 15573 / CFN 42).